The primary structure comprises 329 residues: tRNA-modifying protein YgfZ (329 aa).

Folate-binding residues include Trp28 and Trp188.

Belongs to the tRNA-modifying YgfZ family.

It localises to the cytoplasm. In terms of biological role, folate-binding protein involved in regulating the level of ATP-DnaA and in the modification of some tRNAs. It is probably a key factor in regulatory networks that act via tRNA modification, such as initiation of chromosomal replication. The sequence is that of tRNA-modifying protein YgfZ from Photorhabdus laumondii subsp. laumondii (strain DSM 15139 / CIP 105565 / TT01) (Photorhabdus luminescens subsp. laumondii).